The sequence spans 929 residues: Protein unc-45 homolog A (929 aa).

TPR repeat units follow at residues 6 to 39 (VEQLRKEGNELFKCGDYGGALAAYTQALGLDATP), 43 to 76 (AVLHRNRAACYLKLEDYDKAETEASKAIEKDGGD), and 77 to 110 (VKALYRRSQALEKLGRLDQAVLDLQRCVSLEPKN). Position 55 is an N6-acetyllysine (Lys55). Lys468 is subject to N6-acetyllysine.

Interacts with PGR isoforms A and B as well as with NR3C1 in the absence of ligand, and with HSP90AB1. Binding to HSP90AB1 involves 2 UNC45A monomers per HSP90AB1 dimer.

It is found in the cytoplasm. Its subcellular location is the perinuclear region. The protein localises to the nucleus. May act as co-chaperone for HSP90 (Potential). Prevents the stimulation of HSP90AB1 ATPase activity by AHSA1. Positive factor in promoting PGR function in the cell. May be necessary for proper folding of myosin (Potential). Necessary for normal cell proliferation. Necessary for normal myotube formation and myosin accumulation during muscle cell development. May play a role in erythropoiesis in stroma cells in the spleen. This chain is Protein unc-45 homolog A (UNC45A), found in Pongo abelii (Sumatran orangutan).